The primary structure comprises 244 residues: MVELPFQQSQALNVRQNRALALAGVFQATQLTHMTAMTGQQSIGESGNFYFELLIKASLNIRPTTNNNAVQTLDFFNQLADISLGLKTLENCITQPFTNAPKSRLPKMRSAKLPMSYAMSLLQLEKKVYSNPEYVAIIEKAQQKILKQLSFFDNNYLHPSILANLAQTYVDTAGQINPRILVRGNAEAFKDTNHTNRIRACLFTGLQMAHLWRQLGGSSWNMIFSKRKLLQDIQALARLQYQVI.

It belongs to the HflD family.

The protein localises to the cytoplasm. Its subcellular location is the cell inner membrane. This chain is High frequency lysogenization protein HflD homolog, found in Acinetobacter baumannii (strain SDF).